A 189-amino-acid chain; its full sequence is Protein GrpE (189 aa).

Residues 1–37 are disordered; sequence MSDSSKEKKKKFADMVSRQKGDDQQSDNHKQTDDLNE. Positions 17–33 are enriched in basic and acidic residues; sequence SRQKGDDQQSDNHKQTD.

The protein belongs to the GrpE family. As to quaternary structure, homodimer.

The protein resides in the cytoplasm. Its function is as follows. Participates actively in the response to hyperosmotic and heat shock by preventing the aggregation of stress-denatured proteins, in association with DnaK and GrpE. It is the nucleotide exchange factor for DnaK and may function as a thermosensor. Unfolded proteins bind initially to DnaJ; upon interaction with the DnaJ-bound protein, DnaK hydrolyzes its bound ATP, resulting in the formation of a stable complex. GrpE releases ADP from DnaK; ATP binding to DnaK triggers the release of the substrate protein, thus completing the reaction cycle. Several rounds of ATP-dependent interactions between DnaJ, DnaK and GrpE are required for fully efficient folding. This Wolbachia sp. subsp. Drosophila simulans (strain wRi) protein is Protein GrpE.